The primary structure comprises 516 residues: uncharacterized protein (516 aa).

Residues 1 to 17 (MSVWVALALLGMCVSCT) form the signal peptide. Disordered stretches follow at residues 29–197 (KEPP…EVPR) and 296–426 (RTVS…RDHL). Positions 71-85 (RVPESSQEREQKPES) are enriched in basic and acidic residues. Pro residues predominate over residues 122–144 (VAPPAPPAPTAPRPHRPSPPPVS). A compositionally biased stretch (low complexity) spans 145 to 155 (PSASKPKQRAV). The span at 351–367 (KAQHGTPRPDEKKDREP) shows a compositional bias: basic and acidic residues. The segment covering 394–406 (SPASQPSAPSAAP) has biased composition (low complexity). Positions 415 to 426 (AHKEGQEKRDHL) are enriched in basic and acidic residues.

This is an uncharacterized protein from Treponema pallidum (strain Nichols).